The primary structure comprises 204 residues: MARYRGPRLRVIRRLGDLPGLTRKAVPSRRAYPPGQHGQARKKRSEYAMRLEEKQKLRFNYGLTERQLVRYVRRARRVSGSTGLALLQLLEMRLDNIIFRLGMAPTIPAARQLVNHGHVTVNGRVVSIPSYQCRPGNEIGIRNKENSRRLAEENLKFPGLANLPTHLELDKNKLMAKVNSVVEREWVALQVNELLVVEYYSRKV.

The interval 25–45 (AVPSRRAYPPGQHGQARKKRS) is disordered. An S4 RNA-binding domain is found at 92–152 (MRLDNIIFRL…NKENSRRLAE (61 aa)).

It belongs to the universal ribosomal protein uS4 family. As to quaternary structure, part of the 30S ribosomal subunit. Contacts protein S5. The interaction surface between S4 and S5 is involved in control of translational fidelity.

Its function is as follows. One of the primary rRNA binding proteins, it binds directly to 16S rRNA where it nucleates assembly of the body of the 30S subunit. In terms of biological role, with S5 and S12 plays an important role in translational accuracy. The protein is Small ribosomal subunit protein uS4 of Cyanothece sp. (strain PCC 7425 / ATCC 29141).